We begin with the raw amino-acid sequence, 379 residues long: Cytochrome b (379 aa).

4 helical membrane passes run 33–53 (FGSL…FLAM), 77–98 (WLIR…FIHV), 113–133 (WNIG…GYVL), and 178–198 (FFAF…VHLL). Heme b-binding residues include H83 and H97. Residues H182 and H196 each coordinate heme b. H201 contributes to the a ubiquinone binding site. Transmembrane regions (helical) follow at residues 226-246 (TKDL…ALFF), 288-308 (LGGV…PLLN), 320-340 (VTQV…WIGG), and 347-367 (FTMI…ILMP).

This sequence belongs to the cytochrome b family. As to quaternary structure, the cytochrome bc1 complex contains 11 subunits: 3 respiratory subunits (MT-CYB, CYC1 and UQCRFS1), 2 core proteins (UQCRC1 and UQCRC2) and 6 low-molecular weight proteins (UQCRH/QCR6, UQCRB/QCR7, UQCRQ/QCR8, UQCR10/QCR9, UQCR11/QCR10 and a cleavage product of UQCRFS1). This cytochrome bc1 complex then forms a dimer. Heme b serves as cofactor.

The protein localises to the mitochondrion inner membrane. Its function is as follows. Component of the ubiquinol-cytochrome c reductase complex (complex III or cytochrome b-c1 complex) that is part of the mitochondrial respiratory chain. The b-c1 complex mediates electron transfer from ubiquinol to cytochrome c. Contributes to the generation of a proton gradient across the mitochondrial membrane that is then used for ATP synthesis. This Akodon fumeus (Smoky grass mouse) protein is Cytochrome b (MT-CYB).